A 317-amino-acid polypeptide reads, in one-letter code: DNA repair nuclease/redox regulator APEX1 (317 aa).

The segment at 1–32 is necessary for interaction with YBX1, binding to RNA, association together with NPM1 to rRNA, endoribonuclease activity on abasic RNA and localization in the nucleoli; that stretch reads MPKRGKRAAAEDGEEPKSEPETKKSKGAAKKT. Residues 1 to 57 are disordered; the sequence is MPKRGKRAAAEDGEEPKSEPETKKSKGAAKKTEKEAAGEGPVLYEDPPDQKTSASGK. Lys-6 carries the post-translational modification N6-acetyllysine; by EP300. Residues 8-12 carry the Nuclear localization signal (NLS) motif; that stretch reads AAAED. The segment covering 15-37 has biased composition (basic and acidic residues); it reads EPKSEPETKKSKGAAKKTEKEAA. A Phosphoserine modification is found at Ser-18. A necessary for interaction with NPM1 and for efficient rRNA binding region spans residues 22–32; sequence TKKSKGAAKKT. An N6-acetyllysine mark is found at Lys-26, Lys-30, Lys-31, and Lys-34. Ser-53 is modified (phosphoserine). The short motif at 63–79 is the Nuclear export signal (NES) element; sequence ICSWNVDGLRAWIKKKG. Cys-64 bears the S-nitrosocysteine; alternate mark. Cys-64 and Cys-92 are oxidised to a cystine. A Mg(2+)-binding site is contributed by Asp-69. The residue at position 92 (Cys-92) is an S-nitrosocysteine; alternate. A Mg(2+)-binding site is contributed by Glu-95. Tyr-170 is a catalytic residue. An N6-acetyllysine modification is found at Lys-196. Residues Asp-209 and Asn-211 each contribute to the Mg(2+) site. The active-site Proton donor/acceptor is the Asp-209. Thr-232 carries the post-translational modification Phosphothreonine; by CDK5. The interval 288-317 is mitochondrial targeting sequence (MTS); that stretch reads HSLLPALCDSKIRSKALGSDHCPITLYLAL. Position 307 (Asp-307) interacts with Mg(2+). Cys-309 is subject to S-nitrosocysteine.

It belongs to the DNA repair enzymes AP/ExoA family. In terms of assembly, monomer. Homodimer; disulfide-linked. Component of the SET complex, composed of at least APEX1, SET, ANP32A, HMGB2, NME1 and TREX1. Associates with the dimer XRCC5/XRCC6 in a DNA-dependent manner. Interacts with SIRT1; the interaction is increased in the context of genotoxic stress. Interacts with HDAC1, HDAC2 and HDAC3; the interactions are not dependent on the APEX1 acetylation status. Interacts with XRCC1; the interaction is induced by SIRT1 and increased with the APEX1 acetylated form. Interacts with NPM1 (via N-terminal domain); the interaction is RNA-dependent and decreases in hydrogen peroxide-damaged cells. Interacts (via N-terminus) with YBX1 (via C-terminus); the interaction is increased in presence of APEX1 acetylated. Interacts with HNRNPL; the interaction is DNA-dependent. Interacts (via N-terminus) with KPNA1 and KPNA2. Interacts with TXN; the interaction stimulates the FOS/JUN AP-1 complex DNA-binding activity in a redox-dependent manner. Interacts with GZMA, KRT8, MDM2, POLB, PRDX6, PRPF19, RPLP0, TOMM20 and WDR77. Binds to CDK5. The cofactor is Mg(2+). It depends on Mn(2+) as a cofactor. Post-translationally, phosphorylated. Phosphorylation by kinase PKC or casein kinase CK2 results in enhanced redox activity that stimulates binding of the FOS/JUN AP-1 complex to its cognate binding site. AP-endodeoxyribonuclease activity is not affected by CK2-mediated phosphorylation. Phosphorylation of Thr-232 by CDK5 in response to MPP(+)/MPTP (1-methyl-4-phenylpyridinium) reduces AP-endodeoxyribonuclease activity resulting in accumulation of DNA damage and contributing to neuronal death. Acetylated on Lys-6. Acetylation is increased by the transcriptional coactivator EP300 acetyltransferase, genotoxic agents like H(2)O(2) and methyl methanesulfonate (MMS). Acetylation increases its binding affinity to the negative calcium response element (nCaRE) DNA promoter. The acetylated form induces a stronger binding of YBX1 to the Y-box sequence in the MDR1 promoter than the unacetylated form. Deacetylated on lysines. Lys-6 is deacetylated by SIRT1. In terms of processing, cleaved at Lys-30 by granzyme A to create the mitochondrial form; leading in reduction of binding to DNA, AP endodeoxyribonuclease activity, redox activation of transcription factors and to enhanced cell death. Cleaved by granzyme K; leading to intracellular ROS accumulation and enhanced cell death after oxidative stress. Post-translationally, cys-64 and Cys-92 are nitrosylated in response to nitric oxide (NO) and lead to the exposure of the nuclear export signal (NES). Ubiquitinated by MDM2; leading to translocation to the cytoplasm and proteasomal degradation.

Its subcellular location is the nucleus. The protein localises to the nucleolus. It is found in the nucleus speckle. It localises to the endoplasmic reticulum. The protein resides in the cytoplasm. Its subcellular location is the mitochondrion. It carries out the reaction a deoxyribonucleotide-2'-deoxyribose-5'-monophosphate-DNA + H2O = a 5'-end 2'-deoxyribose-5'-monophosphate-DNA + a 3'-end 2'-deoxyribonucleotide-DNA + H(+). It catalyses the reaction Exonucleolytic cleavage in the 3'- to 5'-direction to yield nucleoside 5'-phosphates.. The enzyme catalyses a 3'-end 2'-deoxyribonucleotide-3'-phosphoglycolate-DNA + H2O = 2-phosphoglycolate + a 3'-end 2'-deoxyribonucleotide-DNA + H(+). The catalysed reaction is a 3'-end 2'-deoxyribonucleotide-8-oxoguanine-DNA + H2O = 8-oxo-dGMP + a 3'-end 2'-deoxyribonucleotide-DNA + H(+). NPM1 stimulates endodeoxyribonuclease activity on double-stranded DNA with AP sites, but inhibits endoribonuclease activity on single-stranded RNA containing AP sites. Its function is as follows. Multifunctional protein that plays a central role in the cellular response to oxidative stress. The two major activities of APEX1 are DNA repair and redox regulation of transcriptional factors. Functions as an apurinic/apyrimidinic (AP) endodeoxyribonuclease in the base excision repair (BER) pathway of DNA lesions induced by oxidative and alkylating agents. Initiates repair of AP sites in DNA by catalyzing hydrolytic incision of the phosphodiester backbone immediately adjacent to the damage, generating a single-strand break with 5'-deoxyribose phosphate and 3'-hydroxyl ends. Also incises at AP sites in the DNA strand of DNA/RNA hybrids, single-stranded DNA regions of R-loop structures, and single-stranded RNA molecules. Operates at switch sites of immunoglobulin (Ig) constant regions where it mediates Ig isotype class switch recombination. Processes AP sites induced by successive action of AICDA and UNG. Generates staggered nicks in opposite DNA strands resulting in the formation of double-strand DNA breaks that are finally resolved via non-homologous end joining repair pathway. Has 3'-5' exodeoxyribonuclease activity on mismatched deoxyribonucleotides at the 3' termini of nicked or gapped DNA molecules during short-patch BER. Possesses DNA 3' phosphodiesterase activity capable of removing lesions (such as phosphoglycolate and 8-oxoguanine) blocking the 3' side of DNA strand breaks. Also acts as an endoribonuclease involved in the control of single-stranded RNA metabolism. Plays a role in regulating MYC mRNA turnover by preferentially cleaving in between UA and CA dinucleotides of the MYC coding region determinant (CRD). In association with NMD1, plays a role in the rRNA quality control process during cell cycle progression. Acts as a loading factor for POLB onto non-incised AP sites in DNA and stimulates the 5'-terminal deoxyribose 5'-phosphate (dRp) excision activity of POLB. Exerts reversible nuclear redox activity to regulate DNA binding affinity and transcriptional activity of transcriptional factors by controlling the redox status of their DNA-binding domain, such as the FOS/JUN AP-1 complex after exposure to IR. Involved in calcium-dependent down-regulation of parathyroid hormone (PTH) expression by binding to negative calcium response elements (nCaREs). Together with HNRNPL or the dimer XRCC5/XRCC6, associates with nCaRE, acting as an activator of transcriptional repression. May also play a role in the epigenetic regulation of gene expression by participating in DNA demethylation. Stimulates the YBX1-mediated MDR1 promoter activity, when acetylated at Lys-6 and Lys-7, leading to drug resistance. Plays a role in protection from granzyme-mediated cellular repair leading to cell death. Binds DNA and RNA. Associates, together with YBX1, on the MDR1 promoter. Together with NPM1, associates with rRNA. In Rattus norvegicus (Rat), this protein is DNA repair nuclease/redox regulator APEX1 (Apex1).